The following is a 690-amino-acid chain: Glycine--tRNA ligase beta subunit (690 aa).

This sequence belongs to the class-II aminoacyl-tRNA synthetase family. As to quaternary structure, tetramer of two alpha and two beta subunits.

It is found in the cytoplasm. The catalysed reaction is tRNA(Gly) + glycine + ATP = glycyl-tRNA(Gly) + AMP + diphosphate. The sequence is that of Glycine--tRNA ligase beta subunit from Desulfitobacterium hafniense (strain Y51).